We begin with the raw amino-acid sequence, 275 residues long: Large ribosomal subunit protein uL2 (275 aa).

Disordered stretches follow at residues 36 to 55 (GLTG…RRMG) and 224 to 263 (VVMN…RQNK).

It belongs to the universal ribosomal protein uL2 family. As to quaternary structure, part of the 50S ribosomal subunit. Forms a bridge to the 30S subunit in the 70S ribosome.

Its function is as follows. One of the primary rRNA binding proteins. Required for association of the 30S and 50S subunits to form the 70S ribosome, for tRNA binding and peptide bond formation. It has been suggested to have peptidyltransferase activity; this is somewhat controversial. Makes several contacts with the 16S rRNA in the 70S ribosome. This chain is Large ribosomal subunit protein uL2, found in Rhodospirillum centenum (strain ATCC 51521 / SW).